The primary structure comprises 420 residues: Gamma-glutamyl phosphate reductase (420 aa).

This sequence belongs to the gamma-glutamyl phosphate reductase family.

It is found in the cytoplasm. It catalyses the reaction L-glutamate 5-semialdehyde + phosphate + NADP(+) = L-glutamyl 5-phosphate + NADPH + H(+). The protein operates within amino-acid biosynthesis; L-proline biosynthesis; L-glutamate 5-semialdehyde from L-glutamate: step 2/2. In terms of biological role, catalyzes the NADPH-dependent reduction of L-glutamate 5-phosphate into L-glutamate 5-semialdehyde and phosphate. The product spontaneously undergoes cyclization to form 1-pyrroline-5-carboxylate. The sequence is that of Gamma-glutamyl phosphate reductase from Neisseria meningitidis serogroup C / serotype 2a (strain ATCC 700532 / DSM 15464 / FAM18).